Consider the following 500-residue polypeptide: Alpha-L-arabinofuranosidase (500 aa).

The signal sequence occupies residues 1 to 21 (MLSNARIIAAGCIAAGSLVAA). N467 is a glycosylation site (N-linked (GlcNAc...) asparagine).

It belongs to the glycosyl hydrolase 54 family.

It carries out the reaction Hydrolysis of terminal non-reducing alpha-L-arabinofuranoside residues in alpha-L-arabinosides.. The protein operates within glycan metabolism; L-arabinan degradation. The sequence is that of Alpha-L-arabinofuranosidase (abf1) from Hypocrea jecorina (Trichoderma reesei).